Consider the following 156-residue polypeptide: Small ribosomal subunit protein uS7c (156 aa).

This sequence belongs to the universal ribosomal protein uS7 family. As to quaternary structure, part of the 30S ribosomal subunit.

The protein localises to the plastid. It is found in the chloroplast. One of the primary rRNA binding proteins, it binds directly to 16S rRNA where it nucleates assembly of the head domain of the 30S subunit. In Rhodomonas salina (Cryptomonas salina), this protein is Small ribosomal subunit protein uS7c (rps7).